A 434-amino-acid polypeptide reads, in one-letter code: Nicotinate phosphoribosyltransferase (434 aa).

Residue His242 is modified to Phosphohistidine; by autocatalysis.

This sequence belongs to the NAPRTase family. In terms of processing, transiently phosphorylated on a His residue during the reaction cycle. Phosphorylation strongly increases the affinity for substrates and increases the rate of nicotinate D-ribonucleotide production. Dephosphorylation regenerates the low-affinity form of the enzyme, leading to product release.

The catalysed reaction is nicotinate + 5-phospho-alpha-D-ribose 1-diphosphate + ATP + H2O = nicotinate beta-D-ribonucleotide + ADP + phosphate + diphosphate. It participates in cofactor biosynthesis; NAD(+) biosynthesis; nicotinate D-ribonucleotide from nicotinate: step 1/1. In terms of biological role, catalyzes the synthesis of beta-nicotinate D-ribonucleotide from nicotinate and 5-phospho-D-ribose 1-phosphate at the expense of ATP. This chain is Nicotinate phosphoribosyltransferase, found in Bradyrhizobium diazoefficiens (strain JCM 10833 / BCRC 13528 / IAM 13628 / NBRC 14792 / USDA 110).